The sequence spans 1393 residues: DNA-directed RNA polymerase subunit beta' (1393 aa).

Positions 70, 72, 85, and 88 each coordinate Zn(2+). Aspartate 461, aspartate 463, and aspartate 465 together coordinate Mg(2+). The Zn(2+) site is built by cysteine 815, cysteine 889, cysteine 896, and cysteine 899.

It belongs to the RNA polymerase beta' chain family. In terms of assembly, the RNAP catalytic core consists of 2 alpha, 1 beta, 1 beta' and 1 omega subunit. When a sigma factor is associated with the core the holoenzyme is formed, which can initiate transcription. The cofactor is Mg(2+). It depends on Zn(2+) as a cofactor.

It carries out the reaction RNA(n) + a ribonucleoside 5'-triphosphate = RNA(n+1) + diphosphate. DNA-dependent RNA polymerase catalyzes the transcription of DNA into RNA using the four ribonucleoside triphosphates as substrates. The protein is DNA-directed RNA polymerase subunit beta' of Vesicomyosocius okutanii subsp. Calyptogena okutanii (strain HA).